The following is an 82-amino-acid chain: RNA-binding protein Hfq (82 aa).

One can recognise a Sm domain in the interval 11–71; that stretch reads DTFLNHVRKT…ISTIMPGAPI (61 aa).

This sequence belongs to the Hfq family. Homohexamer.

Its function is as follows. RNA chaperone that binds small regulatory RNA (sRNAs) and mRNAs to facilitate mRNA translational regulation in response to envelope stress, environmental stress and changes in metabolite concentrations. Also binds with high specificity to tRNAs. The chain is RNA-binding protein Hfq from Rhodopseudomonas palustris (strain TIE-1).